Here is a 499-residue protein sequence, read N- to C-terminus: Cytochrome P450 81E8 (499 aa).

A helical membrane pass occupies residues 3-23 (TFYLSLIISLFFLIITLKVFF). Cysteine 436 contacts heme.

This sequence belongs to the cytochrome P450 family. It depends on heme as a cofactor.

It localises to the membrane. Probable monooxygenases exhibiting no activity with isoflavones such as formononetin, biochanin A, pseudobaptigenin, daidzein, genistein, isoformononetin and prunetin, or with flavonoids including naringenin, liquiritigenin, apigenin, luteolin, or kaempferol. In Medicago truncatula (Barrel medic), this protein is Cytochrome P450 81E8.